A 406-amino-acid polypeptide reads, in one-letter code: Tyrosine--tRNA ligase (406 aa).

Tyrosine 35 contacts L-tyrosine. A 'HIGH' region motif is present at residues 40–49; it reads PTADSLHVGH. Residues tyrosine 168 and glutamine 172 each contribute to the L-tyrosine site. Residues 228–232 carry the 'KMSKS' region motif; sequence KMGKT. Residue lysine 231 coordinates ATP. The S4 RNA-binding domain maps to 340-405; sequence STVLDVIAKV…GKKNYNKIEI (66 aa).

Belongs to the class-I aminoacyl-tRNA synthetase family. TyrS type 1 subfamily. As to quaternary structure, homodimer.

It localises to the cytoplasm. The catalysed reaction is tRNA(Tyr) + L-tyrosine + ATP = L-tyrosyl-tRNA(Tyr) + AMP + diphosphate + H(+). Catalyzes the attachment of tyrosine to tRNA(Tyr) in a two-step reaction: tyrosine is first activated by ATP to form Tyr-AMP and then transferred to the acceptor end of tRNA(Tyr). This is Tyrosine--tRNA ligase from Clostridium botulinum (strain Eklund 17B / Type B).